A 356-amino-acid polypeptide reads, in one-letter code: S-adenosylmethionine:tRNA ribosyltransferase-isomerase (356 aa).

It belongs to the QueA family. As to quaternary structure, monomer.

Its subcellular location is the cytoplasm. The enzyme catalyses 7-aminomethyl-7-carbaguanosine(34) in tRNA + S-adenosyl-L-methionine = epoxyqueuosine(34) in tRNA + adenine + L-methionine + 2 H(+). The protein operates within tRNA modification; tRNA-queuosine biosynthesis. In terms of biological role, transfers and isomerizes the ribose moiety from AdoMet to the 7-aminomethyl group of 7-deazaguanine (preQ1-tRNA) to give epoxyqueuosine (oQ-tRNA). The polypeptide is S-adenosylmethionine:tRNA ribosyltransferase-isomerase (Xanthomonas campestris pv. campestris (strain B100)).